Reading from the N-terminus, the 315-residue chain is Tyrosine recombinase XerC (315 aa).

The Core-binding (CB) domain maps to 1–103 (MITSFYAFLD…AIKSFARFCV (103 aa)). The region spanning 124–306 (ELPSPLTYEQ…SMKLKKQIHD (183 aa)) is the Tyr recombinase domain. Active-site residues include R164, K188, H258, R261, and H284. Y293 (O-(3'-phospho-DNA)-tyrosine intermediate) is an active-site residue.

This sequence belongs to the 'phage' integrase family. XerC subfamily. As to quaternary structure, forms a cyclic heterotetrameric complex composed of two molecules of XerC and two molecules of XerD.

The protein localises to the cytoplasm. Its function is as follows. Site-specific tyrosine recombinase, which acts by catalyzing the cutting and rejoining of the recombining DNA molecules. The XerC-XerD complex is essential to convert dimers of the bacterial chromosome into monomers to permit their segregation at cell division. It also contributes to the segregational stability of plasmids. The chain is Tyrosine recombinase XerC from Chlamydia trachomatis serovar L2b (strain UCH-1/proctitis).